The following is a 546-amino-acid chain: Protein RDR1 (546 aa).

Residues 20–46 (CVPCRERKRKCNGKSPCEMCVAYGYVC) constitute a DNA-binding region (zn(2)-C6 fungal-type).

The protein resides in the nucleus. Its function is as follows. Transcriptional repressor of multidrug resistance genes, such as PDR5. Required for growth on non-fermentable carbon sources like lactate or glycerol. In Saccharomyces cerevisiae (strain ATCC 204508 / S288c) (Baker's yeast), this protein is Protein RDR1 (RDR1).